The primary structure comprises 248 residues: MQFDVVTLFPEMFTAITQSGITRRAFEQKKCELALWNPRDFTSDRHRTVDDRPYGGGPGMVMMVKPLEAAVLEAKKRQIATDLPTPRVIYLSPQGKALTHERVMQLTAEPGLVLLCGRYEAVDQRFLDVCVDEEISLGDFVLSGGELPAMALMDAVIRQLPGVLHDDASAVEDSFVNGLLDCPHYTRPEVYEGVAVPAVLMGGHHVEIEKWRRERALEATAKKRPDMIVKARAAGLLTRADEKFLSSL.

S-adenosyl-L-methionine contacts are provided by residues Gly-117 and Leu-137–Leu-142.

Belongs to the RNA methyltransferase TrmD family. As to quaternary structure, homodimer.

The protein localises to the cytoplasm. The catalysed reaction is guanosine(37) in tRNA + S-adenosyl-L-methionine = N(1)-methylguanosine(37) in tRNA + S-adenosyl-L-homocysteine + H(+). Its function is as follows. Specifically methylates guanosine-37 in various tRNAs. The chain is tRNA (guanine-N(1)-)-methyltransferase from Herminiimonas arsenicoxydans.